A 234-amino-acid chain; its full sequence is 7-carboxy-7-deazaguanine synthase (234 aa).

Residues 36 to 38 (IQG) and R51 contribute to the substrate site. The Radical SAM core domain occupies 42 to 234 (FVGYPSIFIR…LQTHKFLGIE (193 aa)). Residues C55, C59, and C62 each contribute to the [4Fe-4S] cluster site. Residue T64 participates in Mg(2+) binding. Residue T100 coordinates substrate. Residues G102, 144 to 146 (SPK), and 195 to 198 (QSMD) contribute to the S-adenosyl-L-methionine site.

The protein belongs to the radical SAM superfamily. 7-carboxy-7-deazaguanine synthase family. In terms of assembly, homodimer. It depends on [4Fe-4S] cluster as a cofactor. S-adenosyl-L-methionine serves as cofactor. The cofactor is Mg(2+).

It catalyses the reaction 6-carboxy-5,6,7,8-tetrahydropterin + H(+) = 7-carboxy-7-deazaguanine + NH4(+). It participates in purine metabolism; 7-cyano-7-deazaguanine biosynthesis. Functionally, catalyzes the complex heterocyclic radical-mediated conversion of 6-carboxy-5,6,7,8-tetrahydropterin (CPH4) to 7-carboxy-7-deazaguanine (CDG), a step common to the biosynthetic pathways of all 7-deazapurine-containing compounds. The polypeptide is 7-carboxy-7-deazaguanine synthase (Rickettsia prowazekii (strain Madrid E)).